The sequence spans 141 residues: Large ribosomal subunit protein uL11 (141 aa).

This sequence belongs to the universal ribosomal protein uL11 family. Part of the ribosomal stalk of the 50S ribosomal subunit. Interacts with L10 and the large rRNA to form the base of the stalk. L10 forms an elongated spine to which L12 dimers bind in a sequential fashion forming a multimeric L10(L12)X complex. Post-translationally, one or more lysine residues are methylated.

Functionally, forms part of the ribosomal stalk which helps the ribosome interact with GTP-bound translation factors. In Clostridium novyi (strain NT), this protein is Large ribosomal subunit protein uL11.